The primary structure comprises 126 residues: Adult-specific rigid cuticular protein 12.4 (126 aa).

A Chitin-binding type R&amp;R domain is found at 9-87 (GGAYNFGFNT…AMAALAPKAP (79 aa)).

Its function is as follows. Component of the rigid cuticle of the spider. This chain is Adult-specific rigid cuticular protein 12.4, found in Araneus diadematus (European garden spider).